We begin with the raw amino-acid sequence, 2729 residues long: Protein NO VEIN (2729 aa).

A disordered region spans residues 1-27; the sequence is MQGNHDGSWSLHPSTNNGSGRANGNIN. 2 consecutive short sequence motifs (nuclear localization signal) follow at residues 194-201 and 473-480; these read KRKVDVLR and MKRLGGSN. 2 disordered regions span residues 477–517 and 2482–2515; these read GGSN…IPKL and LPSSSKTRHGSSKTNTDDSKQELDTSSSKEDVTE. Composition is skewed to basic and acidic residues over residues 488–497 and 2496–2515; these read RNHEKSDSSK and NTDDSKQELDTSSSKEDVTE.

Specifically expressed in developing embryos, leaf primordia, and shoot and root apical meristems.

The protein localises to the nucleus. Functionally, essential protein required for cell fate determination during embryogenesis. Mediates auxin-dependent coordinated cell-fate specification and patterning in embryos (e.g. cotyledon outgrowth and separation), shoots and roots (e.g. leaf vascular development, cellular patterning and stem cell maintenance in the meristems). Required for provascular PIN1 expression and region-specific expression of PIN7 in leaf primordia, cell type-specific expression of PIN3, PIN4, and PIN7 in the root, and PIN2 polarity in the root cortex. This Arabidopsis thaliana (Mouse-ear cress) protein is Protein NO VEIN.